Reading from the N-terminus, the 314-residue chain is Ribosomal RNA small subunit methyltransferase H (314 aa).

S-adenosyl-L-methionine-binding positions include glycine 58–histidine 60, aspartate 76, phenylalanine 103, aspartate 119, and glutamine 126.

It belongs to the methyltransferase superfamily. RsmH family.

It localises to the cytoplasm. It carries out the reaction cytidine(1402) in 16S rRNA + S-adenosyl-L-methionine = N(4)-methylcytidine(1402) in 16S rRNA + S-adenosyl-L-homocysteine + H(+). Specifically methylates the N4 position of cytidine in position 1402 (C1402) of 16S rRNA. This chain is Ribosomal RNA small subunit methyltransferase H, found in Gloeobacter violaceus (strain ATCC 29082 / PCC 7421).